We begin with the raw amino-acid sequence, 628 residues long: Putative ankyrin repeat protein L769 (628 aa).

ANK repeat units lie at residues 217-246, 333-362, 421-451, and 512-542; these read NYMD…EYDF, DLDE…DINR, TAEN…NHDL, and NNLK…DQDY.

The protein is Putative ankyrin repeat protein L769 of Acanthamoeba polyphaga mimivirus (APMV).